We begin with the raw amino-acid sequence, 472 residues long: Protein hedgehog (472 aa).

Residue cysteine 84 is the site of N-palmitoyl cysteine attachment. Ca(2+)-binding residues include glutamate 149, aspartate 154, glutamate 185, aspartate 188, and aspartate 190. Glycine 256 carries Cholesterol glycine ester lipidation.

It belongs to the hedgehog family. In terms of assembly, interacts with shf. Post-translationally, the C-terminal part of the hedgehog protein precursor displays an autoproteolysis activity that results in the cleavage of the full-length protein into two parts (N-product and C-product). In addition, the C-terminal part displays a cholesterol transferase activity that results by the covalent attachment of a cholesterol moiety to the C-terminal of the newly generated N-product. The N-product is the active species in both local and long-range signaling, whereas the C-product has no signaling activity. In terms of processing, cholesterylation is required for N-product targeting to lipid rafts and multimerization. N-palmitoylation by Rasp of the hedgehog N-product, within the secretory pathway, is required for the embryonic and larval patterning activities of the hedgehog signal.

Its subcellular location is the nucleus. The protein resides in the cytoplasm. The protein localises to the cell membrane. It catalyses the reaction glycyl-L-cysteinyl-[protein] + cholesterol + H(+) = [protein]-C-terminal glycyl cholesterol ester + N-terminal L-cysteinyl-[protein]. The C-terminal part of the hedgehog protein precursor displays an autoproteolysis activity that results in the cleavage of the full-length protein into two parts (N-product and C-product). In addition, the C-terminal part displays a cholesterol transferase activity that results by the covalent attachment of a cholesterol moiety to the C-terminal of the newly generated N-product. Once cleaved, the C-product has no signaling activity and diffuses from the cell. In terms of biological role, the dually lipidated hedgehog protein N-product is a morphogen which is essential for a variety of patterning events during development. Establishes the anterior-posterior axis of the embryonic segments and patterns the larval imaginal disks. Binds to the patched (ptc) receptor, which functions in association with smoothened (smo), to activate the transcription of target genes wingless (wg), decapentaplegic (dpp) and ptc. In the absence of hh, ptc represses the constitutive signaling activity of smo through fused (fu). Essential component of a signaling pathway which regulates the Duox-dependent gut immune response to bacterial uracil; required to activate Cad99C-dependent endosome formation, norpA-dependent Ca2+ mobilization and p38 MAPK, which are essential steps in the Duox-dependent production of reactive oxygen species (ROS) in response to intestinal bacterial infection. During photoreceptor differentiation, it up-regulates transcription of Ubr3, which in turn promotes the hh-signaling pathway by mediating the ubiquitination and degradation of cos. In Drosophila ananassae (Fruit fly), this protein is Protein hedgehog.